Here is a 315-residue protein sequence, read N- to C-terminus: Mannose-6-phosphate isomerase ManA (315 aa).

Zn(2+) contacts are provided by His97, Glu115, and His172. The active site involves Arg192.

It belongs to the mannose-6-phosphate isomerase type 1 family. Zn(2+) serves as cofactor.

The enzyme catalyses D-mannose 6-phosphate = D-fructose 6-phosphate. The sequence is that of Mannose-6-phosphate isomerase ManA (manA) from Bacillus subtilis (strain 168).